The primary structure comprises 101 residues: Apolipoprotein C-II (101 aa).

Residues 1–22 (MGARHLLALLLVLLVLGFEVQG) form the signal peptide. The tract at residues 66-74 (TMDEKIRDM) is lipid binding. The lipoprotein lipase cofactor stretch occupies residues 78 to 101 (STAAVSTYVGIFTDQLLSLLKGED).

It belongs to the apolipoprotein C2 family. In terms of processing, proapolipoprotein C-II is synthesized as a sialic acid containing glycoprotein which is subsequently desialylated prior to its proteolytic processing. Post-translationally, proapolipoprotein C-II, the major form found in plasma undergoes proteolytic cleavage of its N-terminal hexapeptide to generate apolipoprotein C-II, which occurs as the minor form in plasma.

The protein resides in the secreted. Functionally, component of chylomicrons, very low-density lipoproteins (VLDL), low-density lipoproteins (LDL), and high-density lipoproteins (HDL) in plasma. Plays an important role in lipoprotein metabolism as an activator of lipoprotein lipase. Both proapolipoprotein C-II and apolipoprotein C-II can activate lipoprotein lipase. This is Apolipoprotein C-II (APOC2) from Tapirus terrestris (Lowland tapir).